A 397-amino-acid polypeptide reads, in one-letter code: Phosphoglycerate kinase (397 aa).

Substrate is bound by residues 21–23 (DFN), Arg36, 59–62 (HLGR), Arg118, and Arg151. ATP is bound by residues Lys202, Gly293, Glu324, and 353–356 (GGDS).

It belongs to the phosphoglycerate kinase family. As to quaternary structure, monomer.

Its subcellular location is the cytoplasm. It catalyses the reaction (2R)-3-phosphoglycerate + ATP = (2R)-3-phospho-glyceroyl phosphate + ADP. It participates in carbohydrate degradation; glycolysis; pyruvate from D-glyceraldehyde 3-phosphate: step 2/5. The polypeptide is Phosphoglycerate kinase (Chloroherpeton thalassium (strain ATCC 35110 / GB-78)).